A 1372-amino-acid chain; its full sequence is Serine protease pic autotransporter (1372 aa).

An N-terminal signal peptide occupies residues 1-55 (MNKVYSLKYCPVTGGLIAVSELARRVIKKTCRRLTHILLAGIPAICLCYSQISQA). One can recognise a Peptidase S6 domain in the interval 56–301 (GIVRSDIAYQ…NVIPTDYLNQ (246 aa)). Residues H127, D155, and S258 each act as charge relay system in the active site. Residues 1106 to 1372 (DTNGDAGAWA…AVNANFRYMF (267 aa)) enclose the Autotransporter domain.

Cleaved to release the mature protein from the outer membrane.

It is found in the periplasm. It localises to the secreted. Its subcellular location is the cell surface. The protein resides in the cell outer membrane. In terms of biological role, involved in intestinal colonization, displays in vitro mucinolytic activity, serum resistance, and hemagglutination. Important to penetrate the intestinal mucus layer. This is Serine protease pic autotransporter (pic) from Escherichia coli O44:H18 (strain 042 / EAEC).